A 294-amino-acid polypeptide reads, in one-letter code: GTP cyclohydrolase FolE2 (294 aa).

This sequence belongs to the GTP cyclohydrolase IV family.

It catalyses the reaction GTP + H2O = 7,8-dihydroneopterin 3'-triphosphate + formate + H(+). Its pathway is cofactor biosynthesis; 7,8-dihydroneopterin triphosphate biosynthesis; 7,8-dihydroneopterin triphosphate from GTP: step 1/1. Converts GTP to 7,8-dihydroneopterin triphosphate. The chain is GTP cyclohydrolase FolE2 from Acinetobacter baylyi (strain ATCC 33305 / BD413 / ADP1).